Consider the following 201-residue polypeptide: ATP-dependent Clp protease proteolytic subunit (201 aa).

The active-site Nucleophile is the S98. H123 is an active-site residue.

This sequence belongs to the peptidase S14 family. As to quaternary structure, fourteen ClpP subunits assemble into 2 heptameric rings which stack back to back to give a disk-like structure with a central cavity, resembling the structure of eukaryotic proteasomes.

The protein resides in the cytoplasm. It carries out the reaction Hydrolysis of proteins to small peptides in the presence of ATP and magnesium. alpha-casein is the usual test substrate. In the absence of ATP, only oligopeptides shorter than five residues are hydrolyzed (such as succinyl-Leu-Tyr-|-NHMec, and Leu-Tyr-Leu-|-Tyr-Trp, in which cleavage of the -Tyr-|-Leu- and -Tyr-|-Trp bonds also occurs).. Cleaves peptides in various proteins in a process that requires ATP hydrolysis. Has a chymotrypsin-like activity. Plays a major role in the degradation of misfolded proteins. The sequence is that of ATP-dependent Clp protease proteolytic subunit from Rickettsia canadensis (strain McKiel).